The sequence spans 540 residues: Glucose-6-phosphate isomerase (540 aa).

Glu346 functions as the Proton donor in the catalytic mechanism. Catalysis depends on residues His377 and Lys505.

Belongs to the GPI family.

Its subcellular location is the cytoplasm. It catalyses the reaction alpha-D-glucose 6-phosphate = beta-D-fructose 6-phosphate. It participates in carbohydrate biosynthesis; gluconeogenesis. It functions in the pathway carbohydrate degradation; glycolysis; D-glyceraldehyde 3-phosphate and glycerone phosphate from D-glucose: step 2/4. Catalyzes the reversible isomerization of glucose-6-phosphate to fructose-6-phosphate. The protein is Glucose-6-phosphate isomerase of Francisella tularensis subsp. tularensis (strain WY96-3418).